Reading from the N-terminus, the 72-residue chain is Translation initiation factor IF-1 (72 aa).

One can recognise an S1-like domain in the interval 1-72 (MAKEEAIEIE…SKGRITYRYK (72 aa)).

It belongs to the IF-1 family. Component of the 30S ribosomal translation pre-initiation complex which assembles on the 30S ribosome in the order IF-2 and IF-3, IF-1 and N-formylmethionyl-tRNA(fMet); mRNA recruitment can occur at any time during PIC assembly.

Its subcellular location is the cytoplasm. In terms of biological role, one of the essential components for the initiation of protein synthesis. Stabilizes the binding of IF-2 and IF-3 on the 30S subunit to which N-formylmethionyl-tRNA(fMet) subsequently binds. Helps modulate mRNA selection, yielding the 30S pre-initiation complex (PIC). Upon addition of the 50S ribosomal subunit IF-1, IF-2 and IF-3 are released leaving the mature 70S translation initiation complex. The polypeptide is Translation initiation factor IF-1 (Chlorobium luteolum (strain DSM 273 / BCRC 81028 / 2530) (Pelodictyon luteolum)).